Here is a 340-residue protein sequence, read N- to C-terminus: Protein-arginine kinase (340 aa).

The Phosphagen kinase C-terminal domain occupies 14–241 (IVLSSRIRLA…YQIINQEKLA (228 aa)). ATP-binding positions include 17 to 21 (SSRIR), Arg112, 163 to 167 (RASVM), and 194 to 199 (RGIYGE).

Belongs to the ATP:guanido phosphotransferase family.

It carries out the reaction L-arginyl-[protein] + ATP = N(omega)-phospho-L-arginyl-[protein] + ADP + H(+). Its function is as follows. Catalyzes the specific phosphorylation of arginine residues in proteins. The polypeptide is Protein-arginine kinase (Clostridium tetani (strain Massachusetts / E88)).